The primary structure comprises 638 residues: Octopamine receptor 1 (638 aa).

At 1-28 (MSRDIFMKRLRLHLLFDEVAMVTHIVGD) the chain is on the extracellular side. Residues 29 to 53 (VLSSVLLCAVVLLVLVGNTLVVAAV) form a helical membrane-spanning segment. Residues 54–64 (ATSRKLRTVTN) lie on the Cytoplasmic side of the membrane. A helical membrane pass occupies residues 65–87 (VFIVNLACADLLLGVLVLPFSAV). At 88 to 102 (NEIKDVWIFGHVWCQ) the chain is on the extracellular side. A disulfide bond links cysteine 101 and cysteine 230. The helical transmembrane segment at 103–124 (VWLAVDVWLCTASILNLCCISL) threads the bilayer. The Cytoplasmic portion of the chain corresponds to 125–147 (DRYLAITRPIRYPGLMSAKRAKT). Residues 148 to 167 (LVAGVWLFSFVICCPPLIGW) form a helical membrane-spanning segment. Residues 168–239 (NDGGDGIMDY…CELTNSRGYR (72 aa)) are Extracellular-facing. 3 N-linked (GlcNAc...) asparagine glycosylation sites follow: asparagine 178, asparagine 207, and asparagine 215. The chain crosses the membrane as a helical span at residues 240-259 (IYAALGSFFIPMLVMVFFYL). Over 260 to 520 (QIYRAAVKTI…FNREKKAAKT (261 aa)) the chain is Cytoplasmic. The chain crosses the membrane as a helical span at residues 521 to 545 (LAIIVGAFIMCWMPFFTIYLVGAFC). Topologically, residues 546 to 551 (ENCISP) are extracellular. A helical transmembrane segment spans residues 552–575 (IVFSVAFWLGYCNSAMNPCVYALF). Residues 576–638 (SRDFRFAFRK…TASGGNGGYT (63 aa)) are Cytoplasmic-facing. The segment at 618–638 (DDAKSSSDIGPTASGGNGGYT) is disordered.

This sequence belongs to the G-protein coupled receptor 1 family. As to expression, expressed in the central nervous system.

The protein localises to the cell membrane. Functionally, G-protein coupled receptor for octopamine (OA), which is a neurotransmitter, neurohormone, and neuromodulator in invertebrates. Activation of this receptor by octopamine induces an increase in both inositol phosphates and cyclic AMP. The coupling to adenylyl cyclase seems to be less efficient than the coupling to phospholipase C. The rank order of potency for agonists is p-synephrine &gt;= clonidine &gt; p-octopamine = xylometazoline = phenylephrine = oxymetazoline &gt; B-HT920 &gt; serotonin = p-tyramine &gt; epinephrine &gt; norepinephrine &gt; methoxamine = dopamine = histamine. For antagonists, the rank order is yohimbine &gt; chlopromazine / spiperone &gt; phentolamine &gt; mianserine &gt; rauwolscine &gt; prazosin &gt; alprenolol / propanolol &gt; pindolol. This chain is Octopamine receptor 1, found in Lymnaea stagnalis (Great pond snail).